The sequence spans 442 residues: MFS transporter asaE (442 aa).

A compositionally biased stretch (polar residues) spans 1 to 10; that stretch reads MDRSRTSSQG. The interval 1–43 is disordered; the sequence is MDRSRTSSQGRDVLPPRGDEGRISPSLDKEKSPGPEDQPDAPP. The segment covering 17–34 has biased composition (basic and acidic residues); that stretch reads RGDEGRISPSLDKEKSPG. The next 12 helical transmembrane spans lie at 47–67, 89–109, 119–139, 150–170, 177–197, 206–226, 252–272, 288–307, 319–339, 342–362, 381–401, and 413–433; these read LTAWLVVVGAWCTSFCSFGWV, TISWIPSLQIFFMFAMGPIVG, YLIIGGTFFHVFGLMMASIST, ICSAIGAAAIFQPALSAVSAW, IAFATLSTGSSVGGVIFPIMV, FGWSMRISAFMILFLLGIAIV, PVFIVTLLGYMLLTYGVFIPI, LASYLVPMLNGASLFGRLGA, IFIVMCIVAGVLVLALWIPAT, APIIVFATLFGFASGAYVSLS, LLFLFASVGGLTTSPIAGAIL, and IFSGVMLLGGTAFIITARIVG.

This sequence belongs to the major facilitator superfamily. Monocarboxylate porter (TC 2.A.1.13) family.

The protein resides in the cell membrane. It participates in secondary metabolite biosynthesis. Its function is as follows. MFS transporter; part of the gene cluster that mediates the biosynthesis of aspergillic acid. Probably involved in aspergillic acid metabolism and transport. The polypeptide is MFS transporter asaE (Aspergillus flavus (strain ATCC 200026 / FGSC A1120 / IAM 13836 / NRRL 3357 / JCM 12722 / SRRC 167)).